The primary structure comprises 313 residues: Formimidoylglutamase (313 aa).

6 residues coordinate Mn(2+): histidine 130, aspartate 155, histidine 157, aspartate 159, aspartate 241, and aspartate 243.

Belongs to the arginase family. Mn(2+) is required as a cofactor.

The catalysed reaction is N-formimidoyl-L-glutamate + H2O = formamide + L-glutamate. The protein operates within amino-acid degradation; L-histidine degradation into L-glutamate; L-glutamate from N-formimidoyl-L-glutamate (hydrolase route): step 1/1. In terms of biological role, catalyzes the conversion of N-formimidoyl-L-glutamate to L-glutamate and formamide. This is Formimidoylglutamase from Salmonella newport (strain SL254).